We begin with the raw amino-acid sequence, 353 residues long: Putative protein SPATA31J1 (353 aa).

A helical membrane pass occupies residues 34–54 (IPQIIHFVLFVVFSLVILIIL). Residues 122 to 271 (EGSSHHLPRQ…NPGWVSWSDS (150 aa)) form a disordered region. The span at 182–195 (SVESLGSPSSLSSS) shows a compositional bias: low complexity. Over residues 211–221 (PPASTLSPNPT) the composition is skewed to polar residues. Residues 222–237 (SSTESLGYLSSLSSSQ) are compositionally biased toward low complexity. Basic residues predominate over residues 244 to 262 (PLKHPSHKPRGRSLPRRRN).

It belongs to the SPATA31 family.

The protein localises to the membrane. In Homo sapiens (Human), this protein is Putative protein SPATA31J1.